A 277-amino-acid chain; its full sequence is uncharacterized protein (277 aa).

The interval 1-20 (MVTTSPPPTLTNSVQPHPTT) is disordered.

This is an uncharacterized protein from Acidianus convivator (ATV).